The following is a 339-amino-acid chain: DnaJ homolog subfamily C member 22 (339 aa).

The TM2 domain occupies 4 to 50; it reads GLLMTYVLWALGGPVGLHHLYLGRDSHALLWMLTLGGGGLGWLWEFW. Helical transmembrane passes span 5–25, 30–50, 81–101, 105–125, 135–155, 185–205, and 218–238; these read LLMT…HLYL, HALL…WEFW, FASQ…SLSS, FYIV…AAVG, LGAA…ILPI, VGLA…YNTA, and FLSW…VLLL. One can recognise a J domain in the interval 277–339; the sequence is LAHQVLGVPE…LSQPKKPRAS (63 aa).

Its subcellular location is the membrane. Its function is as follows. May function as a co-chaperone. The polypeptide is DnaJ homolog subfamily C member 22 (Dnajc22) (Mus musculus (Mouse)).